The following is a 299-amino-acid chain: HTH-type transcriptional regulator ArgP (299 aa).

In terms of domain architecture, HTH lysR-type spans 4–60 (PDYRALQALDAVIRERGFERAAQKLCITQSAVSQRIKQLENLFGQPLLVRTVPPQPT). The H-T-H motif DNA-binding region spans 21–40 (FERAAQKLCITQSAVSQRIK).

This sequence belongs to the LysR transcriptional regulatory family. In terms of assembly, homodimer.

Functionally, controls the transcription of genes involved in arginine and lysine metabolism. This Proteus mirabilis (strain HI4320) protein is HTH-type transcriptional regulator ArgP.